A 1104-amino-acid chain; its full sequence is A disintegrin and metalloproteinase with thrombospondin motifs 10 (1104 aa).

A signal peptide spans 1 to 25 (MASACQILRWALALGLGLTFKVTHA). Residues 26–233 (FRSQDELLSS…SERGQLGLKR (208 aa)) constitute a propeptide that is removed on maturation. Asparagine 90 and asparagine 222 each carry an N-linked (GlcNAc...) asparagine glycan. The region spanning 239 to 457 (RYVETLVVAD…GLGLCLNNRP (219 aa)) is the Peptidase M12B domain. 11 disulfide bridges follow: cysteine 315–cysteine 376, cysteine 351–cysteine 358, cysteine 370–cysteine 452, cysteine 409–cysteine 436, cysteine 479–cysteine 501, cysteine 490–cysteine 508, cysteine 496–cysteine 531, cysteine 521–cysteine 536, cysteine 559–cysteine 596, cysteine 563–cysteine 601, and cysteine 574–cysteine 586. Histidine 392 provides a ligand contact to Zn(2+). Glutamate 393 is an active-site residue. Zn(2+) is bound by residues histidine 396 and histidine 402. In terms of domain architecture, Disintegrin spans 460 to 546 (QDFVYPTVAP…VPFGSRPEGV (87 aa)). Positions 547–602 (DGAWGPWTPWGDCSRSCGGGVSSSSRHCDSPRPTIGGKYCLGERRRHRSCNTNDCP) constitute a TSP type-1 1 domain. The spacer stretch occupies residues 706–818 (ETIEGVFSPA…PALHYRFNAP (113 aa)). N-linked (GlcNAc...) asparagine glycosylation is found at asparagine 740 and asparagine 795. 4 TSP type-1 domains span residues 825–885 (PPYS…EPCP), 888–943 (WVVG…QGPM), 944–1003 (CPPE…RRCP), and 1004–1058 (PARW…AKCD). Intrachain disulfides connect cysteine 837/cysteine 879, cysteine 841/cysteine 884, and cysteine 852/cysteine 866. A glycan (N-linked (GlcNAc...) asparagine) is linked at asparagine 892. The PLAC domain maps to 1066–1104 (GPEECKDVNKVAYCPLVLKFQFCSRAYFRQMCCKTCQGR).

As to quaternary structure, interacts with FBN1; this interaction promotes microfibrils assembly. It depends on Zn(2+) as a cofactor. In terms of processing, glycosylated. Can be O-fucosylated by POFUT2 on a serine or a threonine residue found within the consensus sequence C1-X(2)-(S/T)-C2-G of the TSP type-1 repeat domains where C1 and C2 are the first and second cysteine residue of the repeat, respectively. Fucosylated repeats can then be further glycosylated by the addition of a beta-1,3-glucose residue by the glucosyltransferase, B3GALTL. Fucosylation mediates the efficient secretion of ADAMTS family members. Can also be C-glycosylated with one or two mannose molecules on tryptophan residues within the consensus sequence W-X-X-W of the TPRs, and N-glycosylated. These other glycosylations can also facilitate secretion. Widely expressed in adult tissues.

It is found in the secreted. The protein resides in the extracellular space. It localises to the extracellular matrix. Metalloprotease that participate in microfibrils assembly. Microfibrils are extracellular matrix components occurring independently or along with elastin in the formation of elastic tissues. The polypeptide is A disintegrin and metalloproteinase with thrombospondin motifs 10 (Adamts10) (Mus musculus (Mouse)).